A 298-amino-acid polypeptide reads, in one-letter code: GTP cyclohydrolase FolE2 (298 aa).

This sequence belongs to the GTP cyclohydrolase IV family.

It catalyses the reaction GTP + H2O = 7,8-dihydroneopterin 3'-triphosphate + formate + H(+). Its pathway is cofactor biosynthesis; 7,8-dihydroneopterin triphosphate biosynthesis; 7,8-dihydroneopterin triphosphate from GTP: step 1/1. Functionally, converts GTP to 7,8-dihydroneopterin triphosphate. The sequence is that of GTP cyclohydrolase FolE2 from Azotobacter vinelandii (strain DJ / ATCC BAA-1303).